A 422-amino-acid polypeptide reads, in one-letter code: Dihydrolipoyllysine-residue succinyltransferase component of 2-oxoglutarate dehydrogenase complex (422 aa).

The Lipoyl-binding domain maps to 1 to 76; sequence MPEVKVPELA…EVGQAIAIIG (76 aa). Lys-42 bears the N6-lipoyllysine mark. Residues 77-185 form a disordered region; sequence EGSGNASKEN…SAKEEKKYNQ (109 aa). Polar residues-rich tracts occupy residues 80–94 and 116–130; these read GNAS…TPQQ and NQAN…NATP. Residues 127 to 163 enclose the Peripheral subunit-binding (PSBD) domain; sequence NATPSARRYARENGVNLAEVSPKTNDVVRKEDIDKKQ. Over residues 152–163 the composition is skewed to basic and acidic residues; the sequence is DVVRKEDIDKKQ. Positions 164-176 are enriched in low complexity; sequence QAPASTQTTQQAS. Active-site residues include His-393 and Asp-397.

Belongs to the 2-oxoacid dehydrogenase family. In terms of assembly, forms a 24-polypeptide structural core with octahedral symmetry. Part of the 2-oxoglutarate dehydrogenase (OGDH) complex composed of E1 (2-oxoglutarate dehydrogenase), E2 (dihydrolipoamide succinyltransferase) and E3 (dihydrolipoamide dehydrogenase); the complex contains multiple copies of the three enzymatic components (E1, E2 and E3). Requires (R)-lipoate as cofactor.

It carries out the reaction N(6)-[(R)-dihydrolipoyl]-L-lysyl-[protein] + succinyl-CoA = N(6)-[(R)-S(8)-succinyldihydrolipoyl]-L-lysyl-[protein] + CoA. Its pathway is amino-acid degradation; L-lysine degradation via saccharopine pathway; glutaryl-CoA from L-lysine: step 6/6. Functionally, E2 component of the 2-oxoglutarate dehydrogenase (OGDH) complex which catalyzes the second step in the conversion of 2-oxoglutarate to succinyl-CoA and CO(2). The sequence is that of Dihydrolipoyllysine-residue succinyltransferase component of 2-oxoglutarate dehydrogenase complex (odhB) from Staphylococcus aureus (strain USA300).